The sequence spans 474 residues: Sialyltransferase-like protein 1 (474 aa).

At 1 to 14 (MRSHQAGRKLPLLQ) the chain is on the cytoplasmic side. The helical; Signal-anchor for type II membrane protein transmembrane segment at 15-35 (LLGCVAVFSVFVFTIQSSFFA) threads the bilayer. Residues 36 to 474 (DNNRKLDLQP…CVRHPLKLDT (439 aa)) are Lumenal-facing. 4 N-linked (GlcNAc...) asparagine glycosylation sites follow: N88, N120, N155, and N243. Residues 376-421 (RLQRSQQPTSSKRDGSGQFGNCKVWGDADPTKGPVSGSPDMSETRK) form a disordered region.

It belongs to the glycosyltransferase 29 family. In terms of tissue distribution, highly expressed in inflorescences and siliques and at lower levels in roots, leaves and stems.

It is found in the golgi apparatus membrane. Its function is as follows. Required for normal pollen grain germination and pollen tube growth. May not be required for pollen development and female gametophytic function. The protein is Sialyltransferase-like protein 1 of Arabidopsis thaliana (Mouse-ear cress).